Reading from the N-terminus, the 250-residue chain is Glycerol-1-phosphate phosphohydrolase 2 (250 aa).

Catalysis depends on aspartate 18, which acts as the Nucleophile. Positions 18 and 20 each coordinate Mg(2+). Catalysis depends on aspartate 20, which acts as the Proton donor. Lysine 64 is covalently cross-linked (Glycyl lysine isopeptide (Lys-Gly) (interchain with G-Cter in ubiquitin)). Residue serine 90 is modified to Phosphoserine. Lysine 144 is covalently cross-linked (Glycyl lysine isopeptide (Lys-Gly) (interchain with G-Cter in ubiquitin)). Aspartate 179 serves as a coordination point for Mg(2+).

It belongs to the HAD-like hydrolase superfamily. DOG/GPP family. In terms of assembly, monomer. Mg(2+) serves as cofactor.

The protein resides in the cytoplasm. The protein localises to the nucleus. It catalyses the reaction sn-glycerol 1-phosphate + H2O = glycerol + phosphate. It carries out the reaction sn-glycerol 3-phosphate + H2O = glycerol + phosphate. Its function is as follows. Glycerol-1-phosphate phosphohydrolase involved in glycerol biosynthesis. Plays a role in osmoadaptation. The polypeptide is Glycerol-1-phosphate phosphohydrolase 2 (Saccharomyces cerevisiae (strain ATCC 204508 / S288c) (Baker's yeast)).